The primary structure comprises 400 residues: MGKEIKKVVLAYSGGLDTSVILKWIAKTYDCEVVTLTADLGQEEDLDGVDEKALRTGATRAYVEDLREEFARDFIFPMMRACAIYEGRYLLGTSIARPLITRRLVEIAHAEGAQAVAHGATGKGNDQVRFELASAALDPSLKVIAPWREWDFRSRTDLLNFAAENDIPVISAGNRKLYSMDRNMLHCSFEGGELEDPWNEPGPGSYIMAVPVEQAPDEPEYITIDFEKGNAVAINGQAMSPAAIIKTLNTLGGKHGVGRLDMVENRFVGMKSRGVYETPGGTVLHAAHRDLEGICLDREALHLRDSLIPRYAAAVYNGFWYSPEREALQALVDKTQENVTGTVRVKLYKGNVVPVGRKSPYSLYRMDLATFEEDEVYNQADAAGFIRLNSLRIQGYGRRS.

ATP-binding positions include 11-19 (AYSGGLDTS) and Ala38. Tyr89 and Ser94 together coordinate L-citrulline. Gly119 contacts ATP. L-aspartate contacts are provided by Thr121, Asn125, and Asp126. Residue Asn125 participates in L-citrulline binding. The L-citrulline site is built by Arg129, Ser179, Ser188, Glu264, and Tyr276.

It belongs to the argininosuccinate synthase family. Type 1 subfamily. As to quaternary structure, homotetramer.

Its subcellular location is the cytoplasm. It catalyses the reaction L-citrulline + L-aspartate + ATP = 2-(N(omega)-L-arginino)succinate + AMP + diphosphate + H(+). It functions in the pathway amino-acid biosynthesis; L-arginine biosynthesis; L-arginine from L-ornithine and carbamoyl phosphate: step 2/3. The polypeptide is Argininosuccinate synthase (Oleidesulfovibrio alaskensis (strain ATCC BAA-1058 / DSM 17464 / G20) (Desulfovibrio alaskensis)).